Reading from the N-terminus, the 538-residue chain is Nicotinate phosphoribosyltransferase (538 aa).

Nicotinate-binding residues include tyrosine 21 and threonine 210. At histidine 213 the chain carries Phosphohistidine. A nicotinate-binding site is contributed by arginine 318. Threonine 380 serves as a coordination point for 5-phospho-alpha-D-ribose 1-diphosphate. Serine 537 carries the phosphoserine modification.

It belongs to the NAPRTase family. As to quaternary structure, homodimer. Mg(2+) serves as cofactor. Requires Mn(2+) as cofactor. In terms of processing, transiently phosphorylated on a His residue during the reaction cycle. Phosphorylation strongly increases the affinity for substrates and increases the rate of nicotinate D-ribonucleotide production. Dephosphorylation regenerates the low-affinity form of the enzyme, leading to product release.

It is found in the cytoplasm. The protein resides in the cytosol. It catalyses the reaction nicotinate + 5-phospho-alpha-D-ribose 1-diphosphate + ATP + H2O = nicotinate beta-D-ribonucleotide + ADP + phosphate + diphosphate. It functions in the pathway cofactor biosynthesis; NAD(+) biosynthesis; nicotinate D-ribonucleotide from nicotinate: step 1/1. In terms of biological role, catalyzes the first step in the biosynthesis of NAD from nicotinic acid, the ATP-dependent synthesis of beta-nicotinate D-ribonucleotide from nicotinate and 5-phospho-D-ribose 1-phosphate. Helps prevent cellular oxidative stress via its role in NAD biosynthesis. In Homo sapiens (Human), this protein is Nicotinate phosphoribosyltransferase (NAPRT).